The chain runs to 279 residues: tRNA dimethylallyltransferase (279 aa).

Glycine 10–serine 17 is a binding site for ATP. Threonine 12–serine 17 lines the substrate pocket.

The protein belongs to the IPP transferase family. As to quaternary structure, monomer. Requires Mg(2+) as cofactor.

The catalysed reaction is adenosine(37) in tRNA + dimethylallyl diphosphate = N(6)-dimethylallyladenosine(37) in tRNA + diphosphate. In terms of biological role, catalyzes the transfer of a dimethylallyl group onto the adenine at position 37 in tRNAs that read codons beginning with uridine, leading to the formation of N6-(dimethylallyl)adenosine (i(6)A). This chain is tRNA dimethylallyltransferase, found in Roseobacter denitrificans (strain ATCC 33942 / OCh 114) (Erythrobacter sp. (strain OCh 114)).